Consider the following 235-residue polypeptide: Intron-encoded endonuclease I-SceI (235 aa).

It belongs to the LAGLIDADG endonuclease family. Monomer. It depends on Mg(2+) as a cofactor.

It is found in the mitochondrion. Mitochondrial DNA endonuclease involved in intron homing. It introduces a specific double-strand break in the DNA of the 21S rRNA gene and thus mediates the insertion of an intron, containing its own coding sequence (group I intron), into an intronless gene. Specifically recognizes and cleaves the sequence 5'-TAGGGATAACAGGGTAAT-3'. The sequence is that of Intron-encoded endonuclease I-SceI (SCEI) from Saccharomyces cerevisiae (strain ATCC 204508 / S288c) (Baker's yeast).